The sequence spans 704 residues: Serotransferrin (704 aa).

A signal peptide spans 1–19 (MRPAVRALLACAVLGLCLA). 2 consecutive Transferrin-like domains span residues 25 to 351 (VRWC…NLRE) and 364 to 689 (VKWC…NLRQ). 2 disulfides stabilise this stretch: Cys28–Cys66 and Cys38–Cys57. Arg42 carries the post-translational modification Dimethylated arginine. Positions 81 and 113 each coordinate Fe(3+). Cystine bridges form between Cys136–Cys217, Cys176–Cys192, Cys179–Cys200, Cys189–Cys202, and Cys250–Cys264. Hydrogencarbonate-binding residues include Thr138, Arg142, Ala144, and Gly145. A Fe(3+)-binding site is contributed by Tyr211. A Fe(3+)-binding site is contributed by His272. Disulfide bonds link Cys362/Cys622, Cys367/Cys399, Cys377/Cys390, Cys424/Cys699, Cys441/Cys663, Cys473/Cys549, Cys497/Cys690, Cys507/Cys521, Cys518/Cys532, Cys589/Cys603, and Cys641/Cys646. Asp414 and Tyr449 together coordinate Fe(3+). Hydrogencarbonate-binding residues include Thr475, Arg479, Ala481, and Gly482. Asn514 carries an N-linked (GlcNAc...) asparagine glycan. A Fe(3+)-binding site is contributed by Tyr543. His611 is a Fe(3+) binding site. Ser691 carries the post-translational modification Phosphoserine.

The protein belongs to the transferrin family. Monomer. Part of a complex composed of SLC40A1/ferroportin, TF/transferrin and HEPH/hephaestin that transfers iron from cells to transferrin. Expressed by the liver and secreted in plasma.

The protein localises to the secreted. Its function is as follows. Transferrins are iron binding transport proteins which can bind two Fe(3+) ions in association with the binding of an anion, usually bicarbonate. It is responsible for the transport of iron from sites of absorption and heme degradation to those of storage and utilization. Serum transferrin may also have a further role in stimulating cell proliferation. This is Serotransferrin (TF) from Bos taurus (Bovine).